Consider the following 395-residue polypeptide: 1-deoxy-D-xylulose 5-phosphate reductoisomerase (395 aa).

Threonine 15, glycine 16, serine 17, isoleucine 18, glycine 41, asparagine 43, and asparagine 126 together coordinate NADPH. Residue lysine 127 coordinates 1-deoxy-D-xylulose 5-phosphate. Residue glutamate 128 coordinates NADPH. Position 152 (aspartate 152) interacts with Mn(2+). Residues serine 153, glutamate 154, serine 178, and histidine 201 each contribute to the 1-deoxy-D-xylulose 5-phosphate site. Glutamate 154 lines the Mn(2+) pocket. Glycine 207 contributes to the NADPH binding site. Serine 214, asparagine 219, lysine 220, and glutamate 223 together coordinate 1-deoxy-D-xylulose 5-phosphate. Glutamate 223 is a Mn(2+) binding site.

It belongs to the DXR family. Mg(2+) serves as cofactor. It depends on Mn(2+) as a cofactor.

The catalysed reaction is 2-C-methyl-D-erythritol 4-phosphate + NADP(+) = 1-deoxy-D-xylulose 5-phosphate + NADPH + H(+). The protein operates within isoprenoid biosynthesis; isopentenyl diphosphate biosynthesis via DXP pathway; isopentenyl diphosphate from 1-deoxy-D-xylulose 5-phosphate: step 1/6. Catalyzes the NADPH-dependent rearrangement and reduction of 1-deoxy-D-xylulose-5-phosphate (DXP) to 2-C-methyl-D-erythritol 4-phosphate (MEP). The protein is 1-deoxy-D-xylulose 5-phosphate reductoisomerase of Ruegeria pomeroyi (strain ATCC 700808 / DSM 15171 / DSS-3) (Silicibacter pomeroyi).